The primary structure comprises 308 residues: Glutamyl-Q tRNA(Asp) synthetase (308 aa).

Residues 19–23 and E55 each bind L-glutamate; that span reads RFAPS. The short motif at 22–32 is the 'HIGH' region element; that stretch reads PSPSGELHFGS. Zn(2+) contacts are provided by C111, C113, Y125, and C129. L-glutamate is bound by residues Y182 and R200. A 'KMSKS' region motif is present at residues 238 to 242; sequence KLSKQ. K241 is an ATP binding site.

The protein belongs to the class-I aminoacyl-tRNA synthetase family. GluQ subfamily. The cofactor is Zn(2+).

Its function is as follows. Catalyzes the tRNA-independent activation of glutamate in presence of ATP and the subsequent transfer of glutamate onto a tRNA(Asp). Glutamate is transferred on the 2-amino-5-(4,5-dihydroxy-2-cyclopenten-1-yl) moiety of the queuosine in the wobble position of the QUC anticodon. This chain is Glutamyl-Q tRNA(Asp) synthetase, found in Escherichia coli O157:H7.